A 70-amino-acid polypeptide reads, in one-letter code: MALTKMKDLRQLSDQEVSDRIAAIKKELFDLRFKKATRQEVKPHQFKHLRHELAQLLTLENERRRSGGQG.

The protein belongs to the universal ribosomal protein uL29 family.

This Thermosynechococcus vestitus (strain NIES-2133 / IAM M-273 / BP-1) protein is Large ribosomal subunit protein uL29.